We begin with the raw amino-acid sequence, 178 residues long: ATP-dependent protease subunit HslV (178 aa).

Thr-7 is an active-site residue. Residues Gly-162, Cys-165, and Thr-168 each coordinate Na(+).

This sequence belongs to the peptidase T1B family. HslV subfamily. In terms of assembly, a double ring-shaped homohexamer of HslV is capped on each side by a ring-shaped HslU homohexamer. The assembly of the HslU/HslV complex is dependent on binding of ATP.

It is found in the cytoplasm. The catalysed reaction is ATP-dependent cleavage of peptide bonds with broad specificity.. Allosterically activated by HslU binding. Protease subunit of a proteasome-like degradation complex believed to be a general protein degrading machinery. The polypeptide is ATP-dependent protease subunit HslV (Azoarcus sp. (strain BH72)).